A 139-amino-acid polypeptide reads, in one-letter code: Short neuropeptide F (139 aa).

The propeptide occupies 1–23 (MGRARRTVRAPAQHDALGGHALA). Residues 1-48 (MGRARRTVRAPAQHDALGGHALARKSVRSPSRRLRFGRRSDPDMPPQA) are disordered. Basic residues predominate over residues 22–37 (LARKSVRSPSRRLRFG). Phenylalanine amide is present on F36. Positions 40–62 (SDPDMPPQAPLDEMNELLSLREV) are excised as a propeptide. Residue F70 is modified to Phenylalanine amide. Positions 74–96 (SEERAVPHIFPQEFLTQEQDRAV) are excised as a propeptide. F105 bears the Phenylalanine amide mark. A propeptide spanning residues 109–139 (SDNNMFLLPYESALPQEVKANGSVEDDRQQE) is cleaved from the precursor.

Belongs to the NPY family. In terms of tissue distribution, sNPF peptide 1: Expressed in corpora cardiaca (CC), corpora allata (CA), antennal lobe (AL) and gnathal ganglion (GNG) (at protein level). Expression in AL detected in all animals, in GNG in most animals, expression in CC and CA in some animals (at protein level). sNPF peptide 2: Expressed in corpora cardiaca (CC), corpora allata (CA), antennal lobe (AL) and gnathal ganglion (GNG) (at protein level). Expression in AL detected in all animals, in GNG, CC and CA in most animals (at protein level). sNPF peptide 3: Expressed in corpora cardiaca (CC), corpora allata (CA), antennal lobe (AL) and gnathal ganglion (GNG) (at protein level). Expression detected in all animals (at protein level).

The protein localises to the secreted. Plays a role in controlling food intake and regulating body size. The protein is Short neuropeptide F of Agrotis ipsilon (Black cutworm moth).